Reading from the N-terminus, the 93-residue chain is Putative membrane protein insertion efficiency factor (93 aa).

This sequence belongs to the UPF0161 family.

The protein localises to the cell inner membrane. Functionally, could be involved in insertion of integral membrane proteins into the membrane. This chain is Putative membrane protein insertion efficiency factor, found in Cupriavidus taiwanensis (strain DSM 17343 / BCRC 17206 / CCUG 44338 / CIP 107171 / LMG 19424 / R1) (Ralstonia taiwanensis (strain LMG 19424)).